The sequence spans 162 residues: Early E1A 18 kDa protein (162 aa).

A disordered region spans residues 134–162; it reads EEPTEGVAENSLKRQADSSLCSSSPKRFC. The span at 150–162 shows a compositional bias: polar residues; that stretch reads DSSLCSSSPKRFC.

The polypeptide is Early E1A 18 kDa protein (Tree shrew adenovirus serotype 1 (TSAdV-1)).